The primary structure comprises 226 residues: Leucyl/phenylalanyl-tRNA--protein transferase (226 aa).

The protein belongs to the L/F-transferase family.

The protein localises to the cytoplasm. The enzyme catalyses N-terminal L-lysyl-[protein] + L-leucyl-tRNA(Leu) = N-terminal L-leucyl-L-lysyl-[protein] + tRNA(Leu) + H(+). It carries out the reaction N-terminal L-arginyl-[protein] + L-leucyl-tRNA(Leu) = N-terminal L-leucyl-L-arginyl-[protein] + tRNA(Leu) + H(+). It catalyses the reaction L-phenylalanyl-tRNA(Phe) + an N-terminal L-alpha-aminoacyl-[protein] = an N-terminal L-phenylalanyl-L-alpha-aminoacyl-[protein] + tRNA(Phe). In terms of biological role, functions in the N-end rule pathway of protein degradation where it conjugates Leu, Phe and, less efficiently, Met from aminoacyl-tRNAs to the N-termini of proteins containing an N-terminal arginine or lysine. The sequence is that of Leucyl/phenylalanyl-tRNA--protein transferase from Azotobacter vinelandii (strain DJ / ATCC BAA-1303).